The primary structure comprises 197 residues: dTTP/UTP pyrophosphatase (197 aa).

Residue D70 is the Proton acceptor of the active site.

It belongs to the Maf family. YhdE subfamily. It depends on a divalent metal cation as a cofactor.

The protein resides in the cytoplasm. It catalyses the reaction dTTP + H2O = dTMP + diphosphate + H(+). The catalysed reaction is UTP + H2O = UMP + diphosphate + H(+). Functionally, nucleoside triphosphate pyrophosphatase that hydrolyzes dTTP and UTP. May have a dual role in cell division arrest and in preventing the incorporation of modified nucleotides into cellular nucleic acids. The sequence is that of dTTP/UTP pyrophosphatase (yceF2) from Escherichia coli O6:K15:H31 (strain 536 / UPEC).